A 496-amino-acid chain; its full sequence is Solute carrier family 2, facilitated glucose transporter member 11 (496 aa).

At 1-11 (MRALRRLIQGR) the chain is on the cytoplasmic side. The helical transmembrane segment at 12-32 (ILLLTICAAGIGGTFQFGYNL) threads the bilayer. At 33-61 (SIINAPTLHIQEFTNETWQARTGEPLPDH) the chain is on the extracellular side. A glycan (N-linked (GlcNAc...) asparagine) is linked at asparagine 47. The chain crosses the membrane as a helical span at residues 62 to 82 (LVLLMWSLIVSLYPLGGLFGA). Residues 83–97 (LLAGPLAITLGRKKS) are Cytoplasmic-facing. Residues 98–118 (LLVNNIFVVSAAILFGFSRKA) form a helical membrane-spanning segment. Residues 119–128 (GSFEMIMLGR) lie on the Extracellular side of the membrane. The chain crosses the membrane as a helical span at residues 129 to 149 (LLVGVNAGVSMNIQPMYLGES). At 150–157 (APKELRGA) the chain is on the cytoplasmic side. The helical transmembrane segment at 158-178 (VAMSSAIFTALGIVMGQVVGL) threads the bilayer. The Extracellular segment spans residues 179–187 (RELLGGPQA). Residues 188-208 (WPLLLASCLVPGALQLASLPL) traverse the membrane as a helical segment. Residues 209-273 (LPESPRYLLI…LFQHRALRRQ (65 aa)) lie on the Cytoplasmic side of the membrane. The helical transmembrane segment at 274–294 (VTSLVVLGSAMELCGNDSVYA) threads the bilayer. The Extracellular segment spans residues 295–311 (YASSVFRKAGVPEAKIQ). Residues 312–332 (YAIIGTGSCELLTAVVSCVVI) form a helical membrane-spanning segment. Residues 333-338 (ERVGRR) lie on the Cytoplasmic side of the membrane. Residues 339 to 359 (VLLIGGYSLMTCWGSIFTVAL) traverse the membrane as a helical segment. The Extracellular segment spans residues 360–364 (CLQSS). The chain crosses the membrane as a helical span at residues 365-385 (FPWTLYLAMACIFAFILSFGI). Residues 386 to 408 (GPAGVTGILATELFDQMARPAAC) are Cytoplasmic-facing. A helical transmembrane segment spans residues 409–429 (MVCGALMWIMLILVGLGFPFI). The Extracellular portion of the chain corresponds to 430–435 (MEALSH). Residues 436–456 (FLYVPFLGVCVCGAIYTGLFL) form a helical membrane-spanning segment. The Cytoplasmic portion of the chain corresponds to 457 to 496 (PETKGKTFQEISKELHRLNFPRRAQGPTWRSLEVIQSTEL).

The protein belongs to the major facilitator superfamily. Sugar transporter (TC 2.A.1.1) family. Glucose transporter subfamily. In terms of tissue distribution, expressed in heart and skeletal muscle.

The protein resides in the cell membrane. The enzyme catalyses D-glucose(out) = D-glucose(in). In terms of biological role, facilitative glucose transporter. The polypeptide is Solute carrier family 2, facilitated glucose transporter member 11 (Homo sapiens (Human)).